We begin with the raw amino-acid sequence, 302 residues long: Large ribosomal subunit protein uL29m (302 aa).

The protein belongs to the universal ribosomal protein uL29 family. As to quaternary structure, component of the mitochondrial large ribosomal subunit. Mature mitochondrial ribosomes consist of a small (37S) and a large (54S) subunit. The 37S subunit contains at least 33 different proteins and 1 molecule of RNA (15S). The 54S subunit contains at least 45 different proteins and 1 molecule of RNA (21S).

It localises to the mitochondrion. The polypeptide is Large ribosomal subunit protein uL29m (MRPL4) (Debaryomyces hansenii (strain ATCC 36239 / CBS 767 / BCRC 21394 / JCM 1990 / NBRC 0083 / IGC 2968) (Yeast)).